The primary structure comprises 447 residues: Tubulin beta-6 chain (447 aa).

Residues Gln11, Glu69, Ser138, Gly142, Thr143, Gly144, Asn204, and Asn226 each contribute to the GTP site. Residue Glu69 participates in Mg(2+) binding. Residues 426–447 (QDATAEEEGEFDEDEELDDGMM) form a disordered region. Acidic residues predominate over residues 429 to 447 (TAEEEGEFDEDEELDDGMM).

This sequence belongs to the tubulin family. Dimer of alpha and beta chains. A typical microtubule is a hollow water-filled tube with an outer diameter of 25 nm and an inner diameter of 15 nM. Alpha-beta heterodimers associate head-to-tail to form protofilaments running lengthwise along the microtubule wall with the beta-tubulin subunit facing the microtubule plus end conferring a structural polarity. Microtubules usually have 13 protofilaments but different protofilament numbers can be found in some organisms and specialized cells. Mg(2+) is required as a cofactor.

It is found in the cytoplasm. Its subcellular location is the cytoskeleton. In terms of biological role, tubulin is the major constituent of microtubules, a cylinder consisting of laterally associated linear protofilaments composed of alpha- and beta-tubulin heterodimers. Microtubules grow by the addition of GTP-tubulin dimers to the microtubule end, where a stabilizing cap forms. Below the cap, tubulin dimers are in GDP-bound state, owing to GTPase activity of alpha-tubulin. In Ectocarpus variabilis (Brown alga), this protein is Tubulin beta-6 chain (TUBB6).